Consider the following 384-residue polypeptide: Spermidine/putrescine import ATP-binding protein PotA (384 aa).

One can recognise an ABC transporter domain in the interval Ile6–Ile238. An ATP-binding site is contributed by Gly40–Ser47.

This sequence belongs to the ABC transporter superfamily. Spermidine/putrescine importer (TC 3.A.1.11.1) family. As to quaternary structure, the complex is composed of two ATP-binding proteins (PotA), two transmembrane proteins (PotB and PotC) and a solute-binding protein (PotD).

Its subcellular location is the cell membrane. The enzyme catalyses ATP + H2O + polyamine-[polyamine-binding protein]Side 1 = ADP + phosphate + polyamineSide 2 + [polyamine-binding protein]Side 1.. Its function is as follows. Part of the ABC transporter complex PotABCD involved in spermidine/putrescine import. Responsible for energy coupling to the transport system. This is Spermidine/putrescine import ATP-binding protein PotA from Streptococcus thermophilus (strain ATCC BAA-491 / LMD-9).